A 483-amino-acid polypeptide reads, in one-letter code: Altronate oxidoreductase (483 aa).

18–29 (IIQFGEGNFLRA) contributes to the NAD(+) binding site.

Belongs to the mannitol dehydrogenase family. UxaB subfamily.

It catalyses the reaction D-altronate + NAD(+) = keto-D-tagaturonate + NADH + H(+). Its pathway is carbohydrate metabolism; pentose and glucuronate interconversion. The sequence is that of Altronate oxidoreductase from Escherichia coli O1:K1 / APEC.